A 278-amino-acid polypeptide reads, in one-letter code: Mediator of RNA polymerase II transcription subunit 18 (278 aa).

This sequence belongs to the Mediator complex subunit 18 family. Component of the Mediator complex.

It localises to the nucleus. Functionally, component of the Mediator complex, a coactivator involved in the regulated transcription of nearly all RNA polymerase II-dependent genes. Mediator functions as a bridge to convey information from gene-specific regulatory proteins to the basal RNA polymerase II transcription machinery. Mediator is recruited to promoters by direct interactions with regulatory proteins and serves as a scaffold for the assembly of a functional preinitiation complex with RNA polymerase II and the general transcription factors. This Aspergillus clavatus (strain ATCC 1007 / CBS 513.65 / DSM 816 / NCTC 3887 / NRRL 1 / QM 1276 / 107) protein is Mediator of RNA polymerase II transcription subunit 18 (srb5).